The following is a 313-amino-acid chain: Olfactory receptor 56A5 (313 aa).

Topologically, residues methionine 1–proline 33 are extracellular. 2 N-linked (GlcNAc...) asparagine glycosylation sites follow: asparagine 6 and asparagine 7. Residues leucine 34–leucine 54 traverse the membrane as a helical segment. Over glutamate 55–serine 67 the chain is Cytoplasmic. A helical membrane pass occupies residues leucine 68–phenylalanine 88. At tryptophan 89–cysteine 100 the chain is on the extracellular side. A disulfide bridge links cysteine 100 with cysteine 182. A helical membrane pass occupies residues phenylalanine 101–methionine 121. The Cytoplasmic segment spans residues alanine 122 to arginine 146. Residues alanine 147 to serine 167 traverse the membrane as a helical segment. Residues arginine 168–phenylalanine 203 lie on the Extracellular side of the membrane. Asparagine 184 and asparagine 198 each carry an N-linked (GlcNAc...) asparagine glycan. A helical membrane pass occupies residues valine 204–isoleucine 224. Topologically, residues leucine 225–serine 246 are cytoplasmic. The chain crosses the membrane as a helical span at residues histidine 247–alanine 267. The Extracellular portion of the chain corresponds to arginine 268 to proline 276. Residues isoleucine 277–valine 297 traverse the membrane as a helical segment. Topologically, residues arginine 298–leucine 313 are cytoplasmic.

Belongs to the G-protein coupled receptor 1 family.

The protein localises to the cell membrane. Its function is as follows. Odorant receptor. This chain is Olfactory receptor 56A5 (OR56A5), found in Homo sapiens (Human).